The sequence spans 646 residues: Zinc finger protein 503 (646 aa).

A compositionally biased stretch (polar residues) spans 1-11 (MSTAPSLSALR). Positions 1 to 70 (MSTAPSLSAL…PPSDPLRQAN (70 aa)) are disordered. Over residues 16-28 (SGGGGGGGGGGGA) the composition is skewed to gly residues. Residues 34–52 (SALSGNSSGPGPGSSPAGS) show a composition bias toward low complexity. Serine 102 carries the phosphoserine modification. Positions 121-332 (SQIGKPDPSP…PSAPTSSSVL (212 aa)) are disordered. A compositionally biased stretch (low complexity) spans 130–139 (PSSKLSSVAS). Composition is skewed to gly residues over residues 140 to 152 (NGGGAGGAGGGAA) and 189 to 205 (GGGGGGGGGGGGGGGGV). Lysine 209 is subject to N6-acetyllysine. The span at 217–226 (ATCQPFTPRT) shows a compositional bias: polar residues. The span at 227–240 (GSPSSSASACSPGG) shows a compositional bias: low complexity. 2 positions are modified to phosphoserine: serine 231 and serine 237. A compositionally biased stretch (basic and acidic residues) spans 250 to 259 (EGKDDKKDTD). Composition is skewed to gly residues over residues 260–277 (VGGGGKGTGGASAEGGPT) and 300–315 (GGPGGKALGSDCGGSS). Residues 316–330 (GSSSGSGPSAPTSSS) show a composition bias toward low complexity. The segment at 514–542 (HICNWVSANGPCDKRFATSEELLSHLRTH) adopts a C2H2-type zinc-finger fold. Arginine 636 bears the Omega-N-methylarginine mark.

This sequence belongs to the Elbow/Noc family.

It is found in the nucleus. In terms of biological role, may function as a transcriptional repressor. The chain is Zinc finger protein 503 (ZNF503) from Homo sapiens (Human).